A 177-amino-acid polypeptide reads, in one-letter code: 2-C-methyl-D-erythritol 2,4-cyclodiphosphate synthase (177 aa).

A divalent metal cation contacts are provided by aspartate 23 and histidine 25. Residues 23–25 (DVH) and 49–50 (HS) each bind 4-CDP-2-C-methyl-D-erythritol 2-phosphate. Residue histidine 57 coordinates a divalent metal cation. Residues 71 to 73 (DIG), 76 to 80 (FSDTD), 115 to 121 (AQAPRMA), and arginine 157 contribute to the 4-CDP-2-C-methyl-D-erythritol 2-phosphate site.

Belongs to the IspF family. Homotrimer. A divalent metal cation serves as cofactor.

The enzyme catalyses 4-CDP-2-C-methyl-D-erythritol 2-phosphate = 2-C-methyl-D-erythritol 2,4-cyclic diphosphate + CMP. The protein operates within isoprenoid biosynthesis; isopentenyl diphosphate biosynthesis via DXP pathway; isopentenyl diphosphate from 1-deoxy-D-xylulose 5-phosphate: step 4/6. Functionally, involved in the biosynthesis of isopentenyl diphosphate (IPP) and dimethylallyl diphosphate (DMAPP), two major building blocks of isoprenoid compounds. Catalyzes the conversion of 4-diphosphocytidyl-2-C-methyl-D-erythritol 2-phosphate (CDP-ME2P) to 2-C-methyl-D-erythritol 2,4-cyclodiphosphate (ME-CPP) with a corresponding release of cytidine 5-monophosphate (CMP). The polypeptide is 2-C-methyl-D-erythritol 2,4-cyclodiphosphate synthase (Nitrosospira multiformis (strain ATCC 25196 / NCIMB 11849 / C 71)).